An 81-amino-acid polypeptide reads, in one-letter code: Small ribosomal subunit protein bS18 (81 aa).

The protein belongs to the bacterial ribosomal protein bS18 family. As to quaternary structure, part of the 30S ribosomal subunit. Forms a tight heterodimer with protein bS6.

Functionally, binds as a heterodimer with protein bS6 to the central domain of the 16S rRNA, where it helps stabilize the platform of the 30S subunit. This chain is Small ribosomal subunit protein bS18, found in Parvibaculum lavamentivorans (strain DS-1 / DSM 13023 / NCIMB 13966).